A 119-amino-acid polypeptide reads, in one-letter code: Flagellar transcriptional regulator FlhD (119 aa).

The protein belongs to the FlhD family. As to quaternary structure, homodimer; disulfide-linked. Forms a heterohexamer composed of two FlhC and four FlhD subunits. Each FlhC binds a FlhD dimer, forming a heterotrimer, and a hexamer assembles by dimerization of two heterotrimers.

Its subcellular location is the cytoplasm. Its function is as follows. Functions in complex with FlhC as a master transcriptional regulator that regulates transcription of several flagellar and non-flagellar operons by binding to their promoter region. Activates expression of class 2 flagellar genes, including fliA, which is a flagellum-specific sigma factor that turns on the class 3 genes. Also regulates genes whose products function in a variety of physiological pathways. The sequence is that of Flagellar transcriptional regulator FlhD from Yersinia enterocolitica.